The chain runs to 503 residues: Transmembrane prolyl 4-hydroxylase (503 aa).

Residues 1–49 (MAAAVATVQRPEAETVEEASNLQWPLPPEHRPSGAATRPGDSEDAPVRP) are disordered. The Cytoplasmic portion of the chain corresponds to 1–61 (MAAAVATVQR…KPRGICSRAY (61 aa)). The chain crosses the membrane as a helical; Signal-anchor for type II membrane protein span at residues 62 to 82 (FLVLMVFVHLYLGNVLALLLF). Residues 83 to 503 (VHYSNGDEST…RAYSDARVEL (421 aa)) are Lumenal-facing. The disordered stretch occupies residues 90-110 (ESTDPGPQRREQSPQPVPTLG). EF-hand domains follow at residues 186–221 (AMQVSQLDLFQLLDQNHDGRLQLREVLAQTRLGNGR) and 225–260 (PENIQEMYSAIKADPDGDGVLSLQEFSNMDLRDFHK). Ca(2+) contacts are provided by Asp-199, Asn-201, Asp-203, Arg-205, Glu-210, Asp-238, Asp-240, Asp-242, and Glu-249. The Fe2OG dioxygenase domain maps to 310–461 (EFSEPLQVVR…KWIANNWINV (152 aa)). Fe cation contacts are provided by His-329 and Asp-331. 2 N-linked (GlcNAc...) asparagine glycosylation sites follow: Asn-349 and Asn-369. Glu-375 is a Fe cation binding site. Asn-383 is a glycosylation site (N-linked (GlcNAc...) asparagine). Lys-452 lines the 2-oxoglutarate pocket.

Homodimer. It depends on Fe(2+) as a cofactor. The cofactor is L-ascorbate. Glycosylated. In terms of tissue distribution, highest expression levels are detected in the eye and brain, especially in the retinal epithelium cells and cortical neurons. Also expressed in skeletal muscle, lung, heart, adrenal gland, kidney, prostate, thyroid and testis.

It is found in the endoplasmic reticulum membrane. It catalyses the reaction L-prolyl-[hypoxia-inducible factor alpha subunit] + 2-oxoglutarate + O2 = trans-4-hydroxy-L-prolyl-[hypoxia-inducible factor alpha subunit] + succinate + CO2. In terms of biological role, catalyzes the post-translational formation of 4-hydroxyproline in hypoxia-inducible factor (HIF) alpha proteins. Hydroxylates HIF1A at 'Pro-402' and 'Pro-564'. May function as a cellular oxygen sensor and, under normoxic conditions, may target HIF through the hydroxylation for proteasomal degradation via the von Hippel-Lindau ubiquitination complex. This Mus musculus (Mouse) protein is Transmembrane prolyl 4-hydroxylase (P4htm).